The chain runs to 420 residues: Glucose-1-phosphate adenylyltransferase (420 aa).

Residues Tyr-107, Gly-172, 187–188, and Ser-205 each bind alpha-D-glucose 1-phosphate; that span reads EK.

This sequence belongs to the bacterial/plant glucose-1-phosphate adenylyltransferase family. Homotetramer.

It carries out the reaction alpha-D-glucose 1-phosphate + ATP + H(+) = ADP-alpha-D-glucose + diphosphate. It functions in the pathway glycan biosynthesis; glycogen biosynthesis. In terms of biological role, involved in the biosynthesis of ADP-glucose, a building block required for the elongation reactions to produce glycogen. Catalyzes the reaction between ATP and alpha-D-glucose 1-phosphate (G1P) to produce pyrophosphate and ADP-Glc. The protein is Glucose-1-phosphate adenylyltransferase of Agrobacterium fabrum (strain C58 / ATCC 33970) (Agrobacterium tumefaciens (strain C58)).